Here is a 382-residue protein sequence, read N- to C-terminus: Protein shisa-9A (382 aa).

The N-terminal stretch at 1 to 26 is a signal peptide; the sequence is MKWTVLLLEYFLVKVLVLLYSADGEA. The Extracellular segment spans residues 27–132; sequence QQLEGFIMLS…DPRHDPTKDK (106 aa). Asparagine 39 carries N-linked (GlcNAc...) asparagine glycosylation. The chain crosses the membrane as a helical span at residues 133–153; it reads TNLIVYIICGVVAIMALVGIF. Over 154–382 the chain is Cytoplasmic; it reads TKLGLEKAHR…VTNSKAEVTV (229 aa).

The protein belongs to the shisa family. SHISA9 subfamily. Component of some AMPA receptors (ionotropic glutamate receptors) complex.

The protein resides in the cell projection. It localises to the dendritic spine membrane. Its subcellular location is the synapse. Regulator of short-term neuronal synaptic plasticity in the dentate gyrus. Associates with AMPA receptors (ionotropic glutamate receptors) in synaptic spines and promotes AMPA receptor desensitization at excitatory synapses. This is Protein shisa-9A (shisa9a) from Danio rerio (Zebrafish).